Reading from the N-terminus, the 382-residue chain is Dual-specificity RNA methyltransferase RlmN (382 aa).

E95 acts as the Proton acceptor in catalysis. Residues 101–349 (EETRGTLCVS…TTVRKTRGDD (249 aa)) enclose the Radical SAM core domain. C108 and C354 are oxidised to a cystine. Residues C115, C119, and C122 each contribute to the [4Fe-4S] cluster site. S-adenosyl-L-methionine contacts are provided by residues 180–181 (GE), S212, 234–236 (SLH), and N311. Residue C354 is the S-methylcysteine intermediate of the active site.

This sequence belongs to the radical SAM superfamily. RlmN family. [4Fe-4S] cluster is required as a cofactor.

Its subcellular location is the cytoplasm. The catalysed reaction is adenosine(2503) in 23S rRNA + 2 reduced [2Fe-2S]-[ferredoxin] + 2 S-adenosyl-L-methionine = 2-methyladenosine(2503) in 23S rRNA + 5'-deoxyadenosine + L-methionine + 2 oxidized [2Fe-2S]-[ferredoxin] + S-adenosyl-L-homocysteine. It carries out the reaction adenosine(37) in tRNA + 2 reduced [2Fe-2S]-[ferredoxin] + 2 S-adenosyl-L-methionine = 2-methyladenosine(37) in tRNA + 5'-deoxyadenosine + L-methionine + 2 oxidized [2Fe-2S]-[ferredoxin] + S-adenosyl-L-homocysteine. Functionally, specifically methylates position 2 of adenine 2503 in 23S rRNA and position 2 of adenine 37 in tRNAs. m2A2503 modification seems to play a crucial role in the proofreading step occurring at the peptidyl transferase center and thus would serve to optimize ribosomal fidelity. The protein is Dual-specificity RNA methyltransferase RlmN of Paraburkholderia phymatum (strain DSM 17167 / CIP 108236 / LMG 21445 / STM815) (Burkholderia phymatum).